Here is a 480-residue protein sequence, read N- to C-terminus: MEVFFLSLLLICVLSVSIRLYLLLYKHRSHFTGPNLPPGKIGWPMVGESLEFLSTGWKGHPEKFIFDRISKYSSEVFKTSLLGEPAAVFAGAAGNKFLFSNENKLVHAWWPSSVDKVFPSSTQTSSKEEAKKMRKLLPQFLKPEALQRYTGIMDHIAQRHFADSWDNRDEVIVFPLAKRFTFWLACRLFMSIEDPAHVAKFEKPFHVLASGLITIPIDLPGTPFHRAIKASNFIRKELRAIIKQRKIDLAESKASKTQDILSHMLLATDEDGCHMNEMSIADKILGLLIGGHDTASSAITFLVKYMAELPHIYEKVYKEQMEIANSKAPGELLNWDDVQKMRYSWNVACEVMRLAPPLQGAFREAITDFVFNGFSIPKGWKLYWSANSTHKSLECFPQPEKFDPTRFEGAGPAPYTFVPFGGGPRMCPGKEYARLEILIFMHNLVKRFKWDKLLPDEKIIVDPMPMPAKGLPVRLHPHKP.

The chain crosses the membrane as a helical span at residues 3-23; that stretch reads VFFLSLLLICVLSVSIRLYLL. C427 is a binding site for heme.

This sequence belongs to the cytochrome P450 family. Heme is required as a cofactor. In terms of tissue distribution, expressed in leaves, stems and fruit skin.

The protein localises to the membrane. It carries out the reaction beta-amyrin + 3 reduced [NADPH--hemoprotein reductase] + 3 O2 = oleanolate + 3 oxidized [NADPH--hemoprotein reductase] + 4 H2O + 4 H(+). Functionally, catalyzes the carboxylation of beta-amyrin at the C-28 position to form oleanolic acid. May be involved in saponin biosynthesis in fruit skin. This chain is Beta-amyrin 28-monooxygenase, found in Vitis vinifera (Grape).